The following is a 105-amino-acid chain: Large ribosomal subunit protein uL24 (105 aa).

This sequence belongs to the universal ribosomal protein uL24 family. As to quaternary structure, part of the 50S ribosomal subunit.

One of two assembly initiator proteins, it binds directly to the 5'-end of the 23S rRNA, where it nucleates assembly of the 50S subunit. In terms of biological role, one of the proteins that surrounds the polypeptide exit tunnel on the outside of the subunit. The sequence is that of Large ribosomal subunit protein uL24 from Staphylococcus haemolyticus (strain JCSC1435).